The sequence spans 273 residues: Outer surface protein A (273 aa).

The signal sequence occupies residues 1 to 16 (MKKYLLGIGLILALIA). Cys-17 carries N-palmitoyl cysteine lipidation. A lipid anchor (S-diacylglycerol cysteine) is attached at Cys-17.

The protein belongs to the OspA lipoprotein family.

The protein resides in the cell outer membrane. It is found in the cell surface. In terms of biological role, induces host (human and mouse) cytokine release by monocyte cell lines via TLR2 and CD14; nonlipidated protein does not stimulate host cells. This is Outer surface protein A from Borreliella burgdorferi (strain ATCC 35210 / DSM 4680 / CIP 102532 / B31) (Borrelia burgdorferi).